A 1593-amino-acid polypeptide reads, in one-letter code: Laminin subunit gamma-1 (1593 aa).

The signal sequence occupies residues 1-19; that stretch reads MSLFSCLLLWTLWAACSHG. A Laminin N-terminal domain is found at 30 to 269; sequence RPQRCMPEFV…AISDFAVGGR (240 aa). Residues asparagine 44 and asparagine 118 are each glycosylated (N-linked (GlcNAc...) asparagine). Disulfide bonds link cysteine 270–cysteine 279, cysteine 272–cysteine 289, cysteine 291–cysteine 300, cysteine 303–cysteine 323, cysteine 326–cysteine 335, cysteine 328–cysteine 351, cysteine 354–cysteine 363, cysteine 366–cysteine 379, cysteine 382–cysteine 394, cysteine 384–cysteine 400, cysteine 402–cysteine 411, cysteine 414–cysteine 426, cysteine 429–cysteine 440, cysteine 431–cysteine 447, cysteine 449–cysteine 458, and cysteine 461–cysteine 476. 4 Laminin EGF-like domains span residues 270 to 325, 326 to 381, 382 to 428, and 429 to 478; these read CKCN…ECLP, CNCN…RCLS, CGCN…GCRP, and CSCN…GCTP. The Laminin IV type A domain maps to 505 to 673; it reads RDDEGWKGKQ…PGTPARWVEK (169 aa). N-linked (GlcNAc...) asparagine glycosylation is found at asparagine 560, asparagine 634, and asparagine 654. Intrachain disulfides connect cysteine 708–cysteine 717, cysteine 710–cysteine 724, cysteine 726–cysteine 735, cysteine 738–cysteine 754, cysteine 757–cysteine 765, cysteine 759–cysteine 776, cysteine 779–cysteine 788, cysteine 791–cysteine 809, cysteine 812–cysteine 826, cysteine 814–cysteine 833, cysteine 836–cysteine 845, cysteine 848–cysteine 865, cysteine 868–cysteine 882, cysteine 870–cysteine 889, cysteine 891–cysteine 900, cysteine 903–cysteine 916, cysteine 919–cysteine 931, cysteine 921–cysteine 938, cysteine 940–cysteine 949, cysteine 952–cysteine 964, cysteine 967–cysteine 979, cysteine 969–cysteine 985, cysteine 987–cysteine 996, and cysteine 999–cysteine 1012. Laminin EGF-like domains follow at residues 708 to 756, 757 to 811, 812 to 867, 868 to 918, 919 to 966, and 967 to 1014; these read CNCN…DCKA, CPCP…ACRA, CSCN…KCKP, CKCS…GCER, CNCN…GCKP, and CDCD…GCQQ. N-linked (GlcNAc...) asparagine glycosylation is found at asparagine 1006, asparagine 1091, asparagine 1159, asparagine 1189, asparagine 1207, asparagine 1254, asparagine 1364, and asparagine 1379. Residues 1014-1593 form a domain II and I region; sequence QCPNCYSLVR…CFNTPSLERP (580 aa). Residues 1021 to 1580 are a coiled coil; it reads LVRDKVNQQR…ANLNDIKNTL (560 aa).

In terms of assembly, laminin is a complex glycoprotein, consisting of three different polypeptide chains (alpha, beta, gamma), which are bound to each other by disulfide bonds into a cross-shaped molecule comprising one long and three short arms with globules at each end.

The protein resides in the secreted. It localises to the extracellular space. It is found in the extracellular matrix. The protein localises to the basement membrane. Its function is as follows. Binding to cells via a high affinity receptor, laminin is thought to mediate the attachment, migration and organization of cells into tissues during embryonic development by interacting with other extracellular matrix components. This Danio rerio (Zebrafish) protein is Laminin subunit gamma-1 (lamc1).